The following is a 227-amino-acid chain: Phosphoribosylformylglycinamidine synthase subunit PurQ (227 aa).

The region spanning 2-226 (KFAVIQFPGS…VQAWKEEQVN (225 aa)) is the Glutamine amidotransferase type-1 domain. The active-site Nucleophile is the Cys86. Residues His195 and Glu197 contribute to the active site.

As to quaternary structure, part of the FGAM synthase complex composed of 1 PurL, 1 PurQ and 2 PurS subunits.

The protein resides in the cytoplasm. It catalyses the reaction N(2)-formyl-N(1)-(5-phospho-beta-D-ribosyl)glycinamide + L-glutamine + ATP + H2O = 2-formamido-N(1)-(5-O-phospho-beta-D-ribosyl)acetamidine + L-glutamate + ADP + phosphate + H(+). The catalysed reaction is L-glutamine + H2O = L-glutamate + NH4(+). Its pathway is purine metabolism; IMP biosynthesis via de novo pathway; 5-amino-1-(5-phospho-D-ribosyl)imidazole from N(2)-formyl-N(1)-(5-phospho-D-ribosyl)glycinamide: step 1/2. Part of the phosphoribosylformylglycinamidine synthase complex involved in the purines biosynthetic pathway. Catalyzes the ATP-dependent conversion of formylglycinamide ribonucleotide (FGAR) and glutamine to yield formylglycinamidine ribonucleotide (FGAM) and glutamate. The FGAM synthase complex is composed of three subunits. PurQ produces an ammonia molecule by converting glutamine to glutamate. PurL transfers the ammonia molecule to FGAR to form FGAM in an ATP-dependent manner. PurS interacts with PurQ and PurL and is thought to assist in the transfer of the ammonia molecule from PurQ to PurL. The sequence is that of Phosphoribosylformylglycinamidine synthase subunit PurQ from Listeria welshimeri serovar 6b (strain ATCC 35897 / DSM 20650 / CCUG 15529 / CIP 8149 / NCTC 11857 / SLCC 5334 / V8).